Reading from the N-terminus, the 72-residue chain is Protein Kish (72 aa).

Positions M1 to G26 are cleaved as a signal peptide. At Q27 to R53 the chain is on the lumenal side. A helical membrane pass occupies residues A54–S72.

This sequence belongs to the KISH family.

Its subcellular location is the endoplasmic reticulum membrane. The protein resides in the golgi apparatus membrane. Functionally, involved in the early part of the secretory pathway. The polypeptide is Protein Kish (Saccharomyces cerevisiae (strain ATCC 204508 / S288c) (Baker's yeast)).